The following is an 879-amino-acid chain: Phosphoinositide 3-kinase regulatory subunit 5 (879 aa).

Positions 23–100 are heterodimerization; it reads SGSTDISSNW…APYIPETSDL (78 aa). Disordered regions lie at residues 314–345 and 570–590; these read SLED…PKQD and SSST…PSPS. Residues 315–336 are compositionally biased toward acidic residues; that stretch reads LEDDVTEEDEEVDFEEVDDKDE. Over residues 570-589 the composition is skewed to polar residues; that stretch reads SSSTNAPMTNAESPLKSPSP. Residues 651–751 are interaction with beta-gamma G protein dimers; the sequence is PILADMVLYY…WSNGEKVCTS (101 aa).

In terms of assembly, heterodimer. Interacts with a catalytic subunit and with beta-gamma G protein dimers.

The protein localises to the nucleus. It localises to the cytoplasm. It is found in the cell membrane. Its activity is regulated as follows. Greatly activated by G gamma proteins. Regulatory subunit of the PI3K gamma complex. Required for recruitment of the catalytic subunit to the plasma membrane via interaction with beta-gamma G protein dimers. Required for G protein-mediated activation of PIK3CG. The sequence is that of Phosphoinositide 3-kinase regulatory subunit 5 (pik3r5) from Xenopus laevis (African clawed frog).